We begin with the raw amino-acid sequence, 404 residues long: High affinity immunoglobulin gamma Fc receptor I (404 aa).

A signal peptide spans 1–24 (MILTSFGDDMWLLTTLLLWVPVGG). At 25–297 (EVVNATKAVI…QVLGPQSSAP (273 aa)) the chain is on the extracellular side. 5 N-linked (GlcNAc...) asparagine glycosylation sites follow: Asn28, Asn48, Asn69, Asn168, and Asn249. Ig-like C2-type domains follow at residues 32–111 (AVIT…LQIH), 117–194 (LQAS…SITV), and 201–286 (PVLR…PELE). 3 cysteine pairs are disulfide-bonded: Cys53/Cys95, Cys134/Cys177, and Cys221/Cys269. The chain crosses the membrane as a helical span at residues 298-320 (VWFHILFYLSVGIMFSLNTVLYV). Residues 321-342 (KIHRLQREKKYNLEVPLVSEQG) are interaction with EPB41L2. Residues 321-404 (KIHRLQREKK…DSTGAQTSQS (84 aa)) are Cytoplasmic-facing. The disordered stretch occupies residues 346–404 (NSFQQVRSDGVYEEVTATASQTTPKEAPDGPRSSVGDCGPEQPEPLPPSDSTGAQTSQS). Phosphoserine is present on Ser347. At Thr368 the chain carries Phosphothreonine. Polar residues predominate over residues 394–404 (SDSTGAQTSQS).

Belongs to the immunoglobulin superfamily. FCGR1 family. In terms of assembly, interacts with FCERG1; forms a functional signaling complex. Interacts with FLNA; prevents FCGR1A degradation. Interacts with EPB41L2, LAT and PPL. Interacts with HCK and LYN. N-glycosylated. In terms of processing, phosphorylated on serine residues. Macrophage-specific.

The protein localises to the cell membrane. Its function is as follows. High affinity receptor for the Fc region of immunoglobulins gamma. Functions in both innate and adaptive immune responses. The polypeptide is High affinity immunoglobulin gamma Fc receptor I (Fcgr1) (Mus musculus (Mouse)).